A 571-amino-acid polypeptide reads, in one-letter code: MSERYSGPLVVEGKLADAERLKQESHYLRGTIAEDLNDGLTGGFNGDNFLLIRFHGMYQQDDRDIRAERAEQKLEPRHAMMLRCRLPGGVMTPQQWLGIDKFAGENTLYGSIRITNRQTFQFHGILKSDLKSAHQLLHELGLDALATANDVNRNVLCTSNPVESELHSQAYEWAKRISEHLLPRTRAYAEIWLDQEKVAATDEEPILGPTYLPRKFKTTVVIPPQNDVDLHANDMNFVAIADNGRLVGFNVLVGGGLSIAHGDKATYPRTASELGYISVDHTLAIAEAVVTTQRDWGNRTNRKNAKTKYTLERVGIDTFRQEVERRAGVTFEPVRPYEFTGRGDRIGWVKGIDKKWHLTLFIENGRILDYPGRPLKTGMAEIAKIHKGDFRLTANQNLIVAGVASRDKASIEALARQYALMDDSVTEQRKNSMACVSLPTCPLAMAEAERFLPQFVTEVEAIMRNHGVGDEHIVLRVTGCPNGCGRALLAEIGLVGKAIGRYNLHLGGNREGTRIPRMYRENITEAEILREIDALVGRWAAERQPDEGFGDFAIRAGIVRPVLDPAVDFYD.

[4Fe-4S] cluster-binding residues include cysteine 435, cysteine 441, cysteine 480, and cysteine 484. Residue cysteine 484 coordinates siroheme.

This sequence belongs to the nitrite and sulfite reductase 4Fe-4S domain family. Alpha(8)-beta(8). The alpha component is a flavoprotein, the beta component is a hemoprotein. It depends on siroheme as a cofactor. [4Fe-4S] cluster is required as a cofactor.

The enzyme catalyses hydrogen sulfide + 3 NADP(+) + 3 H2O = sulfite + 3 NADPH + 4 H(+). Its pathway is sulfur metabolism; hydrogen sulfide biosynthesis; hydrogen sulfide from sulfite (NADPH route): step 1/1. Its function is as follows. Component of the sulfite reductase complex that catalyzes the 6-electron reduction of sulfite to sulfide. This is one of several activities required for the biosynthesis of L-cysteine from sulfate. This is Sulfite reductase [NADPH] hemoprotein beta-component from Musicola paradisiaca (strain Ech703) (Dickeya paradisiaca).